The sequence spans 136 residues: uncharacterized protein (136 aa).

This is an uncharacterized protein from Fowl adenovirus A serotype 1 (strain CELO / Phelps) (FAdV-1).